The chain runs to 686 residues: Methionine--tRNA ligase (686 aa).

The 'HIGH' region signature appears at 15-25 (PYANGSIHLGH). Residues C146, C149, C159, and C162 each contribute to the Zn(2+) site. The 'KMSKS' region motif lies at 332–336 (KMSKS). K335 provides a ligand contact to ATP. In terms of domain architecture, tRNA-binding spans 585-686 (AFEAVDMRIA…EGAQPGMRVM (102 aa)).

The protein belongs to the class-I aminoacyl-tRNA synthetase family. MetG type 1 subfamily. In terms of assembly, homodimer. Zn(2+) is required as a cofactor.

It localises to the cytoplasm. The enzyme catalyses tRNA(Met) + L-methionine + ATP = L-methionyl-tRNA(Met) + AMP + diphosphate. In terms of biological role, is required not only for elongation of protein synthesis but also for the initiation of all mRNA translation through initiator tRNA(fMet) aminoacylation. This chain is Methionine--tRNA ligase, found in Aliivibrio salmonicida (strain LFI1238) (Vibrio salmonicida (strain LFI1238)).